Reading from the N-terminus, the 219-residue chain is Casparian strip membrane protein 3 (219 aa).

The tract at residues 1 to 43 (MDPGREDEVPLAATSPESRRTRSNGRGKATVGDAPPPAETVVS) is disordered. Topologically, residues 1–57 (MDPGREDEVPLAATSPESRRTRSNGRGKATVGDAPPPAETVVSTKAAPLPTGGWKKG) are cytoplasmic. A helical membrane pass occupies residues 58–78 (IAILDFILRLGAIGAAMGASI). The Extracellular segment spans residues 79-108 (LMGTNEQILPFFTQFLQFHAQWDDFPVFKL). The chain crosses the membrane as a helical span at residues 109–129 (FVVLNALAGGFLILSLPLSIV). Over 130-147 (CIVRPLAVGPRFLLLITD) the chain is Cytoplasmic. The chain crosses the membrane as a helical span at residues 148 to 168 (LVNMATVIAAASAAAAIVYVA). The Extracellular segment spans residues 169–193 (HNGSQDANWIAICQQFTDFCQGTSE). N-linked (GlcNAc...) asparagine glycosylation occurs at Asn-170. A helical membrane pass occupies residues 194–214 (AVVVSFVAAVFLVCLIVVSTL). Topologically, residues 215-219 (ALKRT) are cytoplasmic.

The protein belongs to the Casparian strip membrane proteins (CASP) family. Homodimer and heterodimers.

Its subcellular location is the cell membrane. Its function is as follows. Regulates membrane-cell wall junctions and localized cell wall deposition. Required for establishment of the Casparian strip membrane domain (CSD) and the subsequent formation of Casparian strips, a cell wall modification of the root endodermis that determines an apoplastic barrier between the intraorganismal apoplasm and the extraorganismal apoplasm and prevents lateral diffusion. This Lotus japonicus (Lotus corniculatus var. japonicus) protein is Casparian strip membrane protein 3.